We begin with the raw amino-acid sequence, 494 residues long: Glutamyl-tRNA(Gln) amidotransferase subunit A (494 aa).

Residues K72 and S147 each act as charge relay system in the active site. The active-site Acyl-ester intermediate is S171.

The protein belongs to the amidase family. GatA subfamily. In terms of assembly, heterotrimer of A, B and C subunits.

The enzyme catalyses L-glutamyl-tRNA(Gln) + L-glutamine + ATP + H2O = L-glutaminyl-tRNA(Gln) + L-glutamate + ADP + phosphate + H(+). Allows the formation of correctly charged Gln-tRNA(Gln) through the transamidation of misacylated Glu-tRNA(Gln) in organisms which lack glutaminyl-tRNA synthetase. The reaction takes place in the presence of glutamine and ATP through an activated gamma-phospho-Glu-tRNA(Gln). The sequence is that of Glutamyl-tRNA(Gln) amidotransferase subunit A from Methylacidiphilum infernorum (isolate V4) (Methylokorus infernorum (strain V4)).